A 475-amino-acid chain; its full sequence is Protein ABCI7, chloroplastic (475 aa).

The transit peptide at 1–36 (MAAATVLGRLSLIPNLSSKPKLKSNRRTTSTSVSVR) directs the protein to the chloroplast.

Interacts with NAP7.

It is found in the plastid. The protein resides in the chloroplast. The polypeptide is Protein ABCI7, chloroplastic (ABCI7) (Arabidopsis thaliana (Mouse-ear cress)).